Consider the following 26-residue polypeptide: Delta-conotoxin Am2766 (26 aa).

3 cysteine pairs are disulfide-bonded: Cys-1/Cys-16, Cys-8/Cys-20, and Cys-15/Cys-24. Glu-26 carries the post-translational modification Glutamic acid 1-amide.

Expressed by the venom duct.

The protein resides in the secreted. In terms of biological role, delta-conotoxins bind to site 6 of voltage-gated sodium channels (Nav) and inhibit the inactivation process. The polypeptide is Delta-conotoxin Am2766 (Conus amadis (Amadis cone)).